Reading from the N-terminus, the 95-residue chain is RING finger protein Z (95 aa).

A lipid anchor (N-myristoyl glycine; by host) is attached at glycine 2. An RING-type; atypical zinc finger spans residues 38 to 74 (CKSCWFANKGLIKCSNHYLCLKCLTAMLSRSDYCGIC). The PTAP/PSAP motif signature appears at 88–91 (PSAP).

Belongs to the arenaviridae Z protein family. As to quaternary structure, interacts with protein NP; this interaction probably directs the encapsidated genome to budding sites. Interacts (via RING domain) with polymerase L; this interaction inhibits viral transcription and replication, Z partially blocks the product exit tunnel for the releasing nascent RNA product. Interacts with the glycoprotein complex; this interaction plays a role in virion budding. Interacts with host eIF4E; this interaction results in eIF4E reduced affinity for its substrate, the 5'-m7 G cap structure. Interacts (via late-budding domain) with host TSG101; this interaction is essential for budding and release of viral particles. Interacts with host RPLP0; this interaction may serve to load ribosome-like particles inside the virion. Interacts with host PML; this interaction induces PML bodies redistribution in the cytoplasm upon viral infection. Post-translationally, myristoylation is required for the role of RING finger protein Z in assembly and budding.

The protein localises to the virion. The protein resides in the host cytoplasm. Its subcellular location is the host perinuclear region. It localises to the host cell membrane. Its function is as follows. Plays a crucial role in virion assembly and budding. Expressed late in the virus life cycle, it acts as an inhibitor of viral transcription and RNA synthesis by interacting with the viral polymerase L. Presumably recruits the NP encapsidated genome to cellular membranes at budding sites via direct interaction with NP. Plays critical roles in the final steps of viral release by interacting with host TSG101, a member of the vacuolar protein-sorting pathway and using other cellular host proteins involved in vesicle formation pathway. The budding of the virus progeny occurs after association of protein Z with the viral glycoprotein complex SSP-GP1-GP2 at the cell periphery, step that requires myristoylation of protein Z. Also selectively represses protein production by associating with host eIF4E. In cell-based minigenome assay, has an inhibitory effect on the ribonucleoprotein machinery (vRNP), which is responsible for the replication and transcription of the viral genome. The polypeptide is RING finger protein Z (Bear Canyon mammarenavirus (isolate Mouse/United States/AV A0070039/2000) (BCNV)).